The sequence spans 387 residues: 8-amino-7-oxononanoate synthase (387 aa).

Residues R31 and R38 each contribute to the substrate site. Pyridoxal 5'-phosphate is bound at residue 118 to 119 (GY). H143 serves as a coordination point for substrate. Pyridoxal 5'-phosphate contacts are provided by residues S191, 216 to 219 (DDAH), and 236 to 239 (TLSK). K239 carries the post-translational modification N6-(pyridoxal phosphate)lysine. T348 serves as a coordination point for substrate.

Belongs to the class-II pyridoxal-phosphate-dependent aminotransferase family. BioF subfamily. In terms of assembly, homodimer. Pyridoxal 5'-phosphate serves as cofactor.

It catalyses the reaction 6-carboxyhexanoyl-[ACP] + L-alanine + H(+) = (8S)-8-amino-7-oxononanoate + holo-[ACP] + CO2. It participates in cofactor biosynthesis; biotin biosynthesis. Catalyzes the decarboxylative condensation of pimeloyl-[acyl-carrier protein] and L-alanine to produce 8-amino-7-oxononanoate (AON), [acyl-carrier protein], and carbon dioxide. In Methylorubrum populi (strain ATCC BAA-705 / NCIMB 13946 / BJ001) (Methylobacterium populi), this protein is 8-amino-7-oxononanoate synthase.